The primary structure comprises 228 residues: 2-phospho-L-lactate guanylyltransferase (228 aa).

It belongs to the CofC family. Homodimer.

The catalysed reaction is (2S)-2-phospholactate + GTP + H(+) = (2S)-lactyl-2-diphospho-5'-guanosine + diphosphate. It participates in cofactor biosynthesis; coenzyme F420 biosynthesis. Its function is as follows. Guanylyltransferase that catalyzes the activation of (2S)-2-phospholactate (2-PL) as (2S)-lactyl-2-diphospho-5'-guanosine, via the condensation of 2-PL with GTP. It is involved in the biosynthesis of coenzyme F420, a hydride carrier cofactor. This chain is 2-phospho-L-lactate guanylyltransferase, found in Methanosphaera stadtmanae (strain ATCC 43021 / DSM 3091 / JCM 11832 / MCB-3).